The primary structure comprises 211 residues: SAGA-associated factor 11 homolog 1 (211 aa).

Residues Cys115 to Cys136 form an SGF11-type zinc finger. The segment at Arg149–Phe211 is disordered. Residues Ser157–Thr166 are compositionally biased toward low complexity. Ser187 bears the Phosphoserine mark. Over residues Ser197–Phe211 the composition is skewed to low complexity.

This sequence belongs to the SGF11 family. As to quaternary structure, component of some SAGA transcription coactivator-HAT complexes, at least composed of Ada2b, not/nonstop, Pcaf/Gcn5, Sgf11 and Spt3. Within the SAGA complex, Sgf11, e(y)2, and not/nonstop form an additional subcomplex of SAGA called the DUB module (deubiquitination module). Interacts directly with not/nonstop. Interacts with the AMEX complex component xmas-2. Interacts with Cbp80; important for promoter recruitment of Sgf11 that is not associated with the DUB module.

It is found in the nucleus. It localises to the nucleoplasm. The protein resides in the cytoplasm. Component of the transcription regulatory histone acetylation (HAT) complex SAGA, a multiprotein complex that activates transcription by remodeling chromatin and mediating histone acetylation and deubiquitination. Within the SAGA complex, participates in a subcomplex that specifically deubiquitinates histone H2B. The SAGA complex is recruited to specific gene promoters by activators, where it is required for transcription. Required for nuclear receptor-mediated transactivation. Binds independently on SAGA to promoters in an RNA-dependent manner. Binds to mRNA and is essential for total mRNA export from the nucleus. Required to counteract heterochromatin silencing. Controls the development of neuronal connectivity in visual system by being required for accurate axon targeting in the optic lobe. Required for expression of ecdysone-induced genes such as br/broad. This chain is SAGA-associated factor 11 homolog 1, found in Drosophila grimshawi (Hawaiian fruit fly).